The chain runs to 110 residues: Insulin (110 aa).

An N-terminal signal peptide occupies residues 1–23 (MALWLQAFTLLVLLVLSSPGAQS). 3 disulfides stabilise this stretch: Cys30/Cys96, Cys42/Cys109, and Cys95/Cys100. Positions 56–87 (DVDPLLGFLSPKSAQENEADEYPYKDQGDLKV) are cleaved as a propeptide — c peptide.

This sequence belongs to the insulin family. Heterodimer of a B chain and an A chain linked by two disulfide bonds.

The protein resides in the secreted. Its function is as follows. Insulin decreases blood glucose concentration. It increases cell permeability to monosaccharides, amino acids and fatty acids. It accelerates glycolysis, the pentose phosphate cycle, and glycogen synthesis in liver. The chain is Insulin (ins) from Pantodon buchholzi (Freshwater butterflyfish).